The following is a 366-amino-acid chain: Mitogen-activated protein kinase 13 (366 aa).

Residues 25–308 enclose the Protein kinase domain; that stretch reads YVSLTHIGSG…ASQALAHPFF (284 aa). 31–39 contacts ATP; it reads IGSGAYGSV. At Ser47 the chain carries Phosphoserine. Lys54 provides a ligand contact to ATP. The active-site Proton acceptor is Asp150. At Thr180 the chain carries Phosphothreonine; by MAP2K3, MAP2K4, MAP2K6 and MAP2K7. The short motif at 180-182 is the TXY element; sequence TGY. At Tyr182 the chain carries Phosphotyrosine; by MAP2K3, MAP2K4, MAP2K6 and MAP2K7. Ser350 is modified (phosphoserine).

It belongs to the protein kinase superfamily. CMGC Ser/Thr protein kinase family. MAP kinase subfamily. In terms of assembly, interacts with MAPK8IP2. It depends on Mg(2+) as a cofactor. In terms of processing, dually phosphorylated on Thr-180 and Tyr-182 by MAP2K3/MKK3, MAP2K4/MKK4, MAP2K6/MKK6 and MAP2K7/MKK7, which activates the enzyme. Dephosphorylated by dual specificity phosphatase DUSP1.

The catalysed reaction is L-seryl-[protein] + ATP = O-phospho-L-seryl-[protein] + ADP + H(+). It carries out the reaction L-threonyl-[protein] + ATP = O-phospho-L-threonyl-[protein] + ADP + H(+). Activated by phosphorylation on threonine and tyrosine by dual specificity kinases, MAP2K3/MKK3 MAP2K6/MKK6, MAP2K4/MKK4 and MAP2K7/MKK7. Activation by ultraviolet radiation, hyperosmotic shock, anisomycin or by TNF-alpha is mediated by MAP2K3/MKK3. Inhibited by dual specificity phosphatase DUSP1. In terms of biological role, serine/threonine kinase which acts as an essential component of the MAP kinase signal transduction pathway. MAPK13 is one of the four p38 MAPKs which play an important role in the cascades of cellular responses evoked by extracellular stimuli such as pro-inflammatory cytokines or physical stress leading to direct activation of transcription factors such as ELK1 and ATF2. Accordingly, p38 MAPKs phosphorylate a broad range of proteins and it has been estimated that they may have approximately 200 to 300 substrates each. MAPK13 is one of the less studied p38 MAPK isoforms. Some of the targets are downstream kinases such as MAPKAPK2, which are activated through phosphorylation and further phosphorylate additional targets. Plays a role in the regulation of protein translation by phosphorylating and inactivating EEF2K. Involved in cytoskeletal remodeling through phosphorylation of MAPT and STMN1. Mediates UV irradiation induced up-regulation of the gene expression of CXCL14. Plays an important role in the regulation of epidermal keratinocyte differentiation, apoptosis and skin tumor development. Phosphorylates the transcriptional activator MYB in response to stress which leads to rapid MYB degradation via a proteasome-dependent pathway. MAPK13 also phosphorylates and down-regulates PRKD1 during regulation of insulin secretion in pancreatic beta cells. The protein is Mitogen-activated protein kinase 13 (MAPK13) of Bos taurus (Bovine).